The primary structure comprises 434 residues: Glutamyl-tRNA reductase (434 aa).

Substrate-binding positions include 49 to 52 (TCNR), S109, 114 to 116 (EPQ), and Q120. Residue C50 is the Nucleophile of the active site. Position 189–194 (189–194 (GAGEMC)) interacts with NADP(+).

This sequence belongs to the glutamyl-tRNA reductase family. As to quaternary structure, homodimer.

The catalysed reaction is (S)-4-amino-5-oxopentanoate + tRNA(Glu) + NADP(+) = L-glutamyl-tRNA(Glu) + NADPH + H(+). Its pathway is porphyrin-containing compound metabolism; protoporphyrin-IX biosynthesis; 5-aminolevulinate from L-glutamyl-tRNA(Glu): step 1/2. Catalyzes the NADPH-dependent reduction of glutamyl-tRNA(Glu) to glutamate 1-semialdehyde (GSA). This is Glutamyl-tRNA reductase from Trichlorobacter lovleyi (strain ATCC BAA-1151 / DSM 17278 / SZ) (Geobacter lovleyi).